The sequence spans 980 residues: Ras and Rab interactor 3 (980 aa).

Residues 1–40 form a disordered region; that stretch reads MRRAEAPSSAHPAGPIPDAGKGEGEEDEEKDGTRLGLSTT. Residues 63–158 form the SH2 domain; that stretch reads WLQLGLGQAE…LLPFTLRLPQ (96 aa). Positions 247-260 are enriched in pro residues; sequence PLPTGSYPPRPTPA. 2 disordered regions span residues 247–496 and 509–560; these read PLPT…TGAS and QHLQ…LEFS. Positions 261 to 271 are enriched in low complexity; that stretch reads TPDATSPTSKG. Pro residues predominate over residues 274-308; that stretch reads RRPPPPPPLPTVPPTGPARPLAPPVPPAGPLPNSP. Polar residues-rich tracts occupy residues 406–422 and 484–494; these read ISRTASLNLPPQSTVSS and QEASSEKQATG. A compositionally biased stretch (low complexity) spans 514–523; the sequence is QSSSCPQSSP. Positions 584–729 are interaction with RAB5B; that stretch reads FASVFHAFLS…TTTDLGVTTS (146 aa). Positions 700 to 843 constitute a VPS9 domain; sequence HSRDGSLQQL…IKNYDKITVT (144 aa). Residues 865 to 962 enclose the Ras-associating domain; the sequence is KARASRSSVQ…FHFVYRPQDS (98 aa).

The protein belongs to the RIN (Ras interaction/interference) family. In terms of assembly, interacts with CD2AP, RAB5B, RAB31 and BIN1.

Its subcellular location is the cytoplasm. The protein resides in the cytoplasmic vesicle. It is found in the early endosome. Functionally, ras effector protein that functions as a guanine nucleotide exchange (GEF) for RAB5B and RAB31, by exchanging bound GDP for free GTP. Required for normal RAB31 function. The polypeptide is Ras and Rab interactor 3 (Rin3) (Mus musculus (Mouse)).